The sequence spans 190 residues: MQSVVFVTGNANKLREVQDIVGNALPMLTCHQLDLPELQGTTQTVSIHKAKTAAAILKTPVLIEDTSLGFVALNGLPGPYIKWFMESVGHVGLNAMLHGFDDKSAFALCTFAYCEPGHDPILFEGRTDGLIVHPRGPAGFGWDPIFQPCGFTTTYAEMDKDLKNSISHRYKALALVKEFFQSKSDLALHS.

ITP is bound at residue T8–K13. Position 37 (E37) interacts with Mg(2+). Residues K49, D65–T66, K82, F140–D143, K163, and H168–R169 contribute to the ITP site.

It belongs to the HAM1 NTPase family. As to quaternary structure, homodimer. The cofactor is Mg(2+). Mn(2+) is required as a cofactor.

It localises to the cytoplasm. It is found in the nucleus. It carries out the reaction ITP + H2O = IMP + diphosphate + H(+). The enzyme catalyses dITP + H2O = dIMP + diphosphate + H(+). The catalysed reaction is XTP + H2O = XMP + diphosphate + H(+). Its function is as follows. Pyrophosphatase that hydrolyzes non-canonical purine nucleotides such as inosine triphosphate (ITP), deoxyinosine triphosphate (dITP) or xanthosine 5'-triphosphate (XTP) to their respective monophosphate derivatives. The enzyme does not distinguish between the deoxy- and ribose forms. Probably excludes non-canonical purines from RNA and DNA precursor pools, thus preventing their incorporation into RNA and DNA and avoiding chromosomal lesions. This chain is Inosine triphosphate pyrophosphatase, found in Batrachochytrium dendrobatidis (strain JAM81 / FGSC 10211) (Frog chytrid fungus).